Reading from the N-terminus, the 127-residue chain is DNA-directed RNA polymerases I, II, and III subunit RPABC2 (127 aa).

Residues Met1–Glu34 are compositionally biased toward acidic residues. Residues Met1–Thr53 are disordered. Ser2 is modified (N-acetylserine). A Phosphoserine; by CK2 modification is found at Ser2.

This sequence belongs to the archaeal Rpo6/eukaryotic RPB6 RNA polymerase subunit family. Component of the RNA polymerase I (Pol I), RNA polymerase II (Pol II) and RNA polymerase III (Pol III) complexes consisting of at least 13, 12 and 17 subunits, respectively. Pol I complex consists of a ten-subunit catalytic core composed of POLR1A/RPA1, POLR1B/RPA2, POLR1C/RPAC1, POLR1D/RPAC2, POLR1H/RPA12, POLR2E/RPABC1, POLR2F/RPABC2, POLR2H/RPABC3, POLR2K/RPABC4 and POLR2L/RPABC5; a mobile stalk subunit POLR1F/RPA43 protruding from the core and additional subunits homologous to general transcription factors POLR1E/RPA49 and POLR1G/RPA34. Part of Pol I pre-initiation complex (PIC), in which Pol I core assembles with RRN3 and promoter-bound UTBF and SL1/TIF-IB complex. Pol II complex contains a ten-subunit catalytic core composed of POLR2A/RPB1, POLR2B/RPB2, POLR2C/RPB3, POLR2I/RPB9, POLR2J/RPB11, POLR2E/RPABC1, POLR2F/RPABC2, POLR2H/RPABC3, POLR2K/RPABC4 and POLR2L/RPABC5 and a mobile stalk composed of two subunits POLR2D/RPB4 and POLR2G/RPB7. Part of Pol II(G) complex, in which Pol II core associates with an additional subunit POLR2M; unlike conventional Pol II, Pol II(G) functions as a transcriptional repressor. Part of TBP-based Pol II pre-initiation complex (PIC), in which Pol II core assembles with general transcription factors and other specific initiation factors including GTF2E1, GTF2E2, GTF2F1, GTF2F2, TCEA1, ERCC2, ERCC3, GTF2H2, GTF2H3, GTF2H4, GTF2H5, GTF2A1, GTF2A2, GTF2B and TBP; this large multi-subunit PIC complex mediates DNA unwinding and targets Pol II core to the transcription start site where the first phosphodiester bond forms. Pol III complex consists of a ten-subunit catalytic core composed of POLR3A/RPC1, POLR3B/RPC2, POLR1C/RPAC1, POLR1D/RPAC2, POLR3K/RPC10, POLR2E/RPABC1, POLR2F/RPABC2, POLR2H/RPABC3, POLR2K/RPABC4 and POLR2L/RPABC5; a mobile stalk composed of two subunits POLR3H/RPC8 and CRCP/RPC9, protruding from the core and functioning primarily in transcription initiation; and additional subunits homologous to general transcription factors of the RNA polymerase II machinery, POLR3C/RPC3-POLR3F/RPC6-POLR3G/RPC7 heterotrimer required for transcription initiation and POLR3D/RPC4-POLR3E/RPC5 heterodimer involved in both transcription initiation and termination.

Its subcellular location is the nucleus. It localises to the nucleolus. Functionally, DNA-dependent RNA polymerase catalyzes the transcription of DNA into RNA using the four ribonucleoside triphosphates as substrates. Common component of RNA polymerases I, II, and III which synthesize ribosomal RNA precursors, mRNA precursors and many functional non-coding RNAs, and small RNAs, such as 5S rRNA and tRNAs, respectively. Pol II is the central component of the basal RNA polymerase II transcription machinery. Pols are composed of mobile elements that move relative to each other. In Pol II, POLR2F/RPABC2 is part of the clamp element and together with parts of POLR2A/RPB1 and POLR2B/RPB2 forms a pocket to which the POLR2D/RPB4-POLR2G/RPB7 subcomplex binds. This Homo sapiens (Human) protein is DNA-directed RNA polymerases I, II, and III subunit RPABC2.